The following is a 281-amino-acid chain: CDAN1-interacting nuclease 1 (281 aa).

Position 114 is a phosphothreonine (T114).

The protein resides in the nucleus. The protein localises to the cytoplasm. Functionally, plays a role in erythroid cell differentiation. This is CDAN1-interacting nuclease 1 from Homo sapiens (Human).